The primary structure comprises 355 residues: Mu-like prophage FluMu I protein (355 aa).

The protein belongs to the peptidase U35 family.

Potential protease involved in virion morphogenesis. This is Mu-like prophage FluMu I protein from Haemophilus influenzae (strain ATCC 51907 / DSM 11121 / KW20 / Rd).